The chain runs to 490 residues: Betaine aldehyde dehydrogenase (490 aa).

K(+) is bound by residues T26, I27, and D93. Position 150-152 (150-152) interacts with NAD(+); it reads GAW. Residue K162 is the Charge relay system of the active site. 176–179 is a binding site for NAD(+); that stretch reads KPSE. K(+) is bound at residue V180. NAD(+) is bound at residue 230-233; that stretch reads GVAS. L246 contributes to the K(+) binding site. The active-site Proton acceptor is the E252. The NAD(+) site is built by G254, C286, and E387. The active-site Nucleophile is the C286. C286 is modified (cysteine sulfenic acid (-SOH)). K(+) is bound by residues K457 and G460. Catalysis depends on E464, which acts as the Charge relay system.

This sequence belongs to the aldehyde dehydrogenase family. Dimer of dimers. K(+) serves as cofactor.

It catalyses the reaction betaine aldehyde + NAD(+) + H2O = glycine betaine + NADH + 2 H(+). It participates in amine and polyamine biosynthesis; betaine biosynthesis via choline pathway; betaine from betaine aldehyde: step 1/1. Involved in the biosynthesis of the osmoprotectant glycine betaine. Catalyzes the irreversible oxidation of betaine aldehyde to the corresponding acid. The sequence is that of Betaine aldehyde dehydrogenase from Shigella flexneri serotype 5b (strain 8401).